Consider the following 319-residue polypeptide: 33 kDa chaperonin (319 aa).

Cystine bridges form between Cys239–Cys241 and Cys272–Cys275. Residues Glu300–Lys319 are disordered.

The protein belongs to the HSP33 family. In terms of processing, under oxidizing conditions two disulfide bonds are formed involving the reactive cysteines. Under reducing conditions zinc is bound to the reactive cysteines and the protein is inactive.

The protein resides in the cytoplasm. In terms of biological role, redox regulated molecular chaperone. Protects both thermally unfolding and oxidatively damaged proteins from irreversible aggregation. Plays an important role in the bacterial defense system toward oxidative stress. This is 33 kDa chaperonin from Clostridium perfringens (strain ATCC 13124 / DSM 756 / JCM 1290 / NCIMB 6125 / NCTC 8237 / Type A).